A 365-amino-acid polypeptide reads, in one-letter code: Uroporphyrinogen decarboxylase (365 aa).

The segment covering 1–17 (MSANDSPSGQQTTTSAS) has biased composition (polar residues). The disordered stretch occupies residues 1–20 (MSANDSPSGQQTTTSASLDA). Residues 48–52 (RQAGR), Asp97, Tyr172, Ser227, and His341 contribute to the substrate site.

This sequence belongs to the uroporphyrinogen decarboxylase family. As to quaternary structure, homodimer.

Its subcellular location is the cytoplasm. It carries out the reaction uroporphyrinogen III + 4 H(+) = coproporphyrinogen III + 4 CO2. It participates in porphyrin-containing compound metabolism; protoporphyrin-IX biosynthesis; coproporphyrinogen-III from 5-aminolevulinate: step 4/4. Catalyzes the decarboxylation of four acetate groups of uroporphyrinogen-III to yield coproporphyrinogen-III. In Streptomyces griseus subsp. griseus (strain JCM 4626 / CBS 651.72 / NBRC 13350 / KCC S-0626 / ISP 5235), this protein is Uroporphyrinogen decarboxylase.